Consider the following 184-residue polypeptide: Acireductone dioxygenase (184 aa).

Fe(2+) is bound by residues histidine 97, histidine 99, glutamate 103, and histidine 141. The Ni(2+) site is built by histidine 97, histidine 99, glutamate 103, and histidine 141.

This sequence belongs to the acireductone dioxygenase (ARD) family. In terms of assembly, monomer. Fe(2+) serves as cofactor. Requires Ni(2+) as cofactor.

The catalysed reaction is 1,2-dihydroxy-5-(methylsulfanyl)pent-1-en-3-one + O2 = 3-(methylsulfanyl)propanoate + CO + formate + 2 H(+). It carries out the reaction 1,2-dihydroxy-5-(methylsulfanyl)pent-1-en-3-one + O2 = 4-methylsulfanyl-2-oxobutanoate + formate + 2 H(+). The protein operates within amino-acid biosynthesis; L-methionine biosynthesis via salvage pathway; L-methionine from S-methyl-5-thio-alpha-D-ribose 1-phosphate: step 5/6. Catalyzes 2 different reactions between oxygen and the acireductone 1,2-dihydroxy-3-keto-5-methylthiopentene (DHK-MTPene) depending upon the metal bound in the active site. Fe-containing acireductone dioxygenase (Fe-ARD) produces formate and 2-keto-4-methylthiobutyrate (KMTB), the alpha-ketoacid precursor of methionine in the methionine recycle pathway. Ni-containing acireductone dioxygenase (Ni-ARD) produces methylthiopropionate, carbon monoxide and formate, and does not lie on the methionine recycle pathway. In Parvibaculum lavamentivorans (strain DS-1 / DSM 13023 / NCIMB 13966), this protein is Acireductone dioxygenase.